The following is a 248-amino-acid chain: Peroxisomal membrane protein 11A (248 aa).

Residues 1–97 (MATKAPEKIT…RSSRWDSNHE (97 aa)) lie on the Cytoplasmic side of the membrane. A helical membrane pass occupies residues 98 to 118 (LVLLIIAYGGEGLYYFVEQFI). Topologically, residues 119-220 (WLTKSGLIDA…MTIADIRDGK (102 aa)) are lumenal. A helical transmembrane segment spans residues 221–241 (GVLSAPNVISSAGLFSAIVST). Residues 242–248 (HKNWISC) are Cytoplasmic-facing.

Belongs to the peroxin-11 family. As to quaternary structure, homooligomer. Interacts with ARC5 and FIS1B on peroxisomes. Expressed in developing siliques.

It localises to the peroxisome membrane. Involved in peroxisomal proliferation. Promotes peroxisomal duplication, aggregation or elongation without fission. This chain is Peroxisomal membrane protein 11A (PEX11A), found in Arabidopsis thaliana (Mouse-ear cress).